The chain runs to 265 residues: Glutamate racemase (265 aa).

Residues 9-10 (DS) and 41-42 (YG) each bind substrate. Cys-73 serves as the catalytic Proton donor/acceptor. 74–75 (NT) is a binding site for substrate. Catalysis depends on Cys-180, which acts as the Proton donor/acceptor. Residue 181 to 182 (TH) participates in substrate binding.

This sequence belongs to the aspartate/glutamate racemases family.

The catalysed reaction is L-glutamate = D-glutamate. Its pathway is cell wall biogenesis; peptidoglycan biosynthesis. In terms of biological role, provides the (R)-glutamate required for cell wall biosynthesis. This chain is Glutamate racemase, found in Aliivibrio salmonicida (strain LFI1238) (Vibrio salmonicida (strain LFI1238)).